A 538-amino-acid chain; its full sequence is Syncytin-2 (538 aa).

The first 15 residues, 1 to 15 (MGLLLLLLILTPLLA), serve as a signal peptide directing secretion. The Extracellular segment spans residues 16–478 (AYCHPDFRLL…GWLNWEGTWK (463 aa)). The CXXC motif lies at 43-46 (CWLC). 3 disulfide bridges follow: C43/C46, C43/C439, and C431/C438. N146, N177, N220, N241, N247, N312, and N332 each carry an N-linked (GlcNAc...) asparagine glycan. A fusion peptide region spans residues 354–374 (LIPLLVGLGIVGSAGTGIAGI). The CKS-17 motif lies at 414-430 (LQNRRGLDMLTAAQGGI). The CX6CC signature appears at 431-439 (CLALDEKCC). N443 carries N-linked (GlcNAc...) asparagine glycosylation. A helical membrane pass occupies residues 479–499 (WFSWVLPFTGPLVSLLLLLLF). Residues 500-538 (GPCLLNLITQFVSSRLQATKLQMKLNKRVHPRNSQESPF) lie on the Cytoplasmic side of the membrane.

This sequence belongs to the gamma type-C retroviral envelope protein family. HERV class-I FRD env subfamily. The surface and transmembrane proteins form a heterodimer. They are attached by non-covalent interactions or by a labile interchain disulfide bond. Post-translationally, specific enzymatic cleavages in vivo yield the mature SU and TM proteins. In terms of processing, the CXXC motif is highly conserved across a broad range of retroviral envelope proteins. It is thought to participate in the formation of a labile disulfide bond possibly with the CX6CC motif present in the transmembrane protein.

The protein resides in the virion. It localises to the cell membrane. Functionally, this endogenous retroviral envelope protein has retained its original fusogenic properties and participates in trophoblast fusion and the formation of a syncytium during placenta morphogenesis. The interaction with MFSD2A is apparently important for this process. Its function is as follows. Endogenous envelope proteins may have kept, lost or modified their original function during evolution but this one can still make pseudotypes with MLV, HIV-1 or SIV-1 virions and confer infectivity. Retroviral envelope proteins mediate receptor recognition and membrane fusion during early infection. The surface protein mediates receptor recognition, while the transmembrane protein anchors the envelope heterodimer to the viral membrane through one transmembrane domain. The other hydrophobic domain, called fusion peptide, mediates fusion of the viral membrane with the target cell membrane. This is Syncytin-2 (ERVFRD-1) from Callithrix jacchus (White-tufted-ear marmoset).